Reading from the N-terminus, the 715-residue chain is Polyribonucleotide nucleotidyltransferase (715 aa).

Mg(2+) contacts are provided by Asp485 and Asp491. Positions 552 to 611 (PRIHTMKIDPKKIKDVIGKGGAVIRALTEETGTSIDIDDDGTVKIAATDNNAAKAVMARI) constitute a KH domain. An S1 motif domain is found at 621–689 (NAIYKGKVTR…RQNRIRLTMK (69 aa)). A disordered region spans residues 695 to 715 (TPVAENVTEEAEVSSEQQAEI).

Belongs to the polyribonucleotide nucleotidyltransferase family. Component of the RNA degradosome, which is a multiprotein complex involved in RNA processing and mRNA degradation. It depends on Mg(2+) as a cofactor.

Its subcellular location is the cytoplasm. It catalyses the reaction RNA(n+1) + phosphate = RNA(n) + a ribonucleoside 5'-diphosphate. Its function is as follows. Involved in mRNA degradation. Catalyzes the phosphorolysis of single-stranded polyribonucleotides processively in the 3'- to 5'-direction. The protein is Polyribonucleotide nucleotidyltransferase of Actinobacillus pleuropneumoniae serotype 7 (strain AP76).